We begin with the raw amino-acid sequence, 776 residues long: GATOR2 complex protein Wdr24 (776 aa).

WD repeat units lie at residues 63–103 (NLSY…RQKQ), 109–149 (EHER…SINT), 152–192 (CNSE…KCMV), 196–235 (AHYG…GLEH), 238–280 (HTIA…IPFA), and 284–326 (EHTN…ALKA). Residues 466 to 490 (HRSSFSNQKNPMNSRRATQVASDWP) form a disordered region. The segment covering 469-490 (SFSNQKNPMNSRRATQVASDWP) has biased composition (polar residues). Residues 703–726 (NCGECGRPMGGKVGWYCDKCKSMQ) form a C4-type zinc finger. Positions 704, 707, 719, 722, 730, 733, 744, 747, 749, 752, 755, 766, 769, 771, and 773 each coordinate Zn(2+). An RING-type; atypical zinc finger spans residues 728 to 776 (AKCCVCGLIVRGVYAWCQGCSHGGHIEHLQKYFAKHSKCPKCGHLCAYS).

It belongs to the WD repeat WDR24 family. As to quaternary structure, component of the GATOR complex consisting of mio, Nup44A/Seh1, Im11, Nplr3, Nplr2, Wdr24, Wdr59 and Sec13. Within the GATOR complex, probable component of the GATOR2 subcomplex which is likely composed of mio, Nup44A/Seh1, Wdr24, Wdr59 and Sec13. Interacts with Nup44A/Seh1. Interacts with mio. Interacts with Nplr3. The GATOR2 complex associates with unmet in the absence of S-adenosyl-L-methionine; the mio-Wdr24-Nup44A subcomplex is essential and sufficient for this interaction while Wdr59 and Sec13 are dispensable. This association acts as a nutrient sensor to inhibit mTORC1 signaling in the absence of methionine.

The protein resides in the lysosome. It localises to the cytoplasmic vesicle. It is found in the autophagosome. It carries out the reaction S-ubiquitinyl-[E2 ubiquitin-conjugating enzyme]-L-cysteine + [acceptor protein]-L-lysine = [E2 ubiquitin-conjugating enzyme]-L-cysteine + N(6)-ubiquitinyl-[acceptor protein]-L-lysine.. The protein operates within protein modification; protein ubiquitination. In terms of biological role, an essential component of the GATOR subcomplex GATOR2 which functions as an activator of the amino acid-sensing branch of the mTORC1 signaling pathway. The two GATOR subcomplexes, GATOR1 and GATOR2, regulate the mTORC1 pathway in order to mediate metabolic homeostasis, female gametogenesis and the response to amino acid limitation and complete starvation. GATOR2 activates the mTORC1 signaling pathway through the inhibition of the GATOR1 subcomplex, controlling the switch to cell proliferation and growth under nutrient replete conditions and during female oocyte development. GATOR2 probably acts as an E3 ubiquitin-protein ligase toward GATOR1. In the presence of abundant amino acids, the GATOR2 complex mediates ubiquitination of components of the GATOR1 complex, leading to GATOR1 inactivation. This GATOR2 component is required for activating mTORC1 and promoting cell growth in both germline and somatic cells. In addition to its role in regulation of the mTORC1 complex, functions independently of mTORC1 to promote the acidification of lysosomes and facilitates autophagic flux. The protein is GATOR2 complex protein Wdr24 of Drosophila melanogaster (Fruit fly).